The chain runs to 122 residues: S-adenosylmethionine decarboxylase proenzyme (122 aa).

Residue S63 is the Schiff-base intermediate with substrate; via pyruvic acid of the active site. S63 is subject to Pyruvic acid (Ser); by autocatalysis. H68 functions as the Proton acceptor; for processing activity in the catalytic mechanism. Residue C83 is the Proton donor; for catalytic activity of the active site.

This sequence belongs to the prokaryotic AdoMetDC family. Type 1 subfamily. Heterotetramer of two alpha and two beta chains arranged as a dimer of alpha/beta heterodimers. It depends on pyruvate as a cofactor. Post-translationally, is synthesized initially as an inactive proenzyme. Formation of the active enzyme involves a self-maturation process in which the active site pyruvoyl group is generated from an internal serine residue via an autocatalytic post-translational modification. Two non-identical subunits are generated from the proenzyme in this reaction, and the pyruvate is formed at the N-terminus of the alpha chain, which is derived from the carboxyl end of the proenzyme. The post-translation cleavage follows an unusual pathway, termed non-hydrolytic serinolysis, in which the side chain hydroxyl group of the serine supplies its oxygen atom to form the C-terminus of the beta chain, while the remainder of the serine residue undergoes an oxidative deamination to produce ammonia and the pyruvoyl group blocking the N-terminus of the alpha chain.

The catalysed reaction is S-adenosyl-L-methionine + H(+) = S-adenosyl 3-(methylsulfanyl)propylamine + CO2. The protein operates within amine and polyamine biosynthesis; S-adenosylmethioninamine biosynthesis; S-adenosylmethioninamine from S-adenosyl-L-methionine: step 1/1. Its function is as follows. Catalyzes the decarboxylation of S-adenosylmethionine to S-adenosylmethioninamine (dcAdoMet), the propylamine donor required for the synthesis of the polyamines spermine and spermidine from the diamine putrescine. This Methanococcus maripaludis (strain C5 / ATCC BAA-1333) protein is S-adenosylmethionine decarboxylase proenzyme.